The sequence spans 470 residues: tRNA modification GTPase MnmE (470 aa).

(6S)-5-formyl-5,6,7,8-tetrahydrofolate-binding residues include R30, E92, and R132. Residues 227-393 enclose the TrmE-type G domain; it reads GLQVALVGRP…LIKAVLKTCG (167 aa). N237 serves as a coordination point for K(+). GTP-binding positions include 237–242, 256–262, 281–284, and 342–345; these read NVGKSS, TDLPGTT, DTAG, and NKAD. S241 contributes to the Mg(2+) binding site. K(+) contacts are provided by T256, L258, and T261. T262 provides a ligand contact to Mg(2+). K470 is a binding site for (6S)-5-formyl-5,6,7,8-tetrahydrofolate.

The protein belongs to the TRAFAC class TrmE-Era-EngA-EngB-Septin-like GTPase superfamily. TrmE GTPase family. Homodimer. Heterotetramer of two MnmE and two MnmG subunits. Requires K(+) as cofactor.

The protein resides in the cytoplasm. In terms of biological role, exhibits a very high intrinsic GTPase hydrolysis rate. Involved in the addition of a carboxymethylaminomethyl (cmnm) group at the wobble position (U34) of certain tRNAs, forming tRNA-cmnm(5)s(2)U34. The protein is tRNA modification GTPase MnmE of Prochlorococcus marinus (strain MIT 9313).